Consider the following 444-residue polypeptide: Homogentisate 1,2-dioxygenase (444 aa).

The active-site Proton acceptor is H298. Residues H341 and E347 each contribute to the Fe cation site. Residues Y356 and H377 each coordinate homogentisate. H377 provides a ligand contact to Fe cation.

Belongs to the homogentisate dioxygenase family. In terms of assembly, hexamer; dimer of trimers. It depends on Fe cation as a cofactor.

It carries out the reaction homogentisate + O2 = 4-maleylacetoacetate + H(+). Its pathway is amino-acid degradation; L-phenylalanine degradation; acetoacetate and fumarate from L-phenylalanine: step 4/6. Involved in the catabolism of homogentisate (2,5-dihydroxyphenylacetate or 2,5-OH-PhAc), a central intermediate in the degradation of phenylalanine and tyrosine. Catalyzes the oxidative ring cleavage of the aromatic ring of homogentisate to yield maleylacetoacetate. In Burkholderia lata (strain ATCC 17760 / DSM 23089 / LMG 22485 / NCIMB 9086 / R18194 / 383), this protein is Homogentisate 1,2-dioxygenase.